A 436-amino-acid polypeptide reads, in one-letter code: Voltage-gated purine nucleotide uniporter SLC17A9 (436 aa).

10 helical membrane-spanning segments follow: residues 64–84 (IVLSSFFWGYCLTQVVGGHLG), 92–112 (VILLSASAWGSITAVTPLLAH), 118–138 (LAFMTFSRILMGLLQGVYFPA), 158–178 (IVGAGSQFGTLLTGAVGSLLL), 181–201 (YGWQSIFYFSGGLTLLWVWYV), 239–259 (PAVWAAVVSQLSAACSFFILL), 276–296 (WIFNVVPWLVAIPASLFSGFL), 316–336 (GMGLGLSSVFALCLGHTSSFC), 369–389 (GFLFGVANTAGALAGVVGVCL), and 402–422 (CLFNLVAIISNLGLCTFLVFG).

It belongs to the major facilitator superfamily. Sodium/anion cotransporter family. In terms of tissue distribution, widely expressed, but more predominantly in adrenal gland, brain and thyroid.

The protein resides in the cytoplasmic vesicle. It localises to the secretory vesicle. Its subcellular location is the chromaffin granule membrane. The protein localises to the secretory vesicle membrane. It is found in the lysosome membrane. It catalyses the reaction ATP(in) = ATP(out). The catalysed reaction is ADP(in) = ADP(out). It carries out the reaction GTP(in) = GTP(out). Activity is chloride-dependent. Inhibited by AMP-PNP, gammaS-ATP, diadenosine triphosphate, 4,4'- diisothiocyanatostilbene-2,2'-disulfonate (DIDS) and Evans blue. Its function is as follows. Voltage-gated ATP nucleotide uniporter that can also transport the purine nucleotides ADP and GTP. Uses the membrane potential as the driving force to control ATP accumulation in lysosomes and secretory vesicles. By controlling ATP storage in lysosomes, regulates ATP-dependent proteins of these organelles. Also indirectly regulates the exocytosis of ATP through its import into lysosomes in astrocytes and secretory vesicles such as adrenal chromaffin granules, mucin granules and synaptic vesicles. The sequence is that of Voltage-gated purine nucleotide uniporter SLC17A9 from Homo sapiens (Human).